Consider the following 119-residue polypeptide: UPF0738 protein BAA_1286 (119 aa).

The protein belongs to the UPF0738 family.

The polypeptide is UPF0738 protein BAA_1286 (Bacillus anthracis (strain A0248)).